Here is a 692-residue protein sequence, read N- to C-terminus: Elongation factor G (692 aa).

The region spanning 8-282 (EKTRNIGIMA…AVIDYLPSPL (275 aa)) is the tr-type G domain. Residues 17–24 (AHVDAGKT), 81–85 (DTPGH), and 135–138 (NKMD) each bind GTP.

The protein belongs to the TRAFAC class translation factor GTPase superfamily. Classic translation factor GTPase family. EF-G/EF-2 subfamily.

The protein resides in the cytoplasm. In terms of biological role, catalyzes the GTP-dependent ribosomal translocation step during translation elongation. During this step, the ribosome changes from the pre-translocational (PRE) to the post-translocational (POST) state as the newly formed A-site-bound peptidyl-tRNA and P-site-bound deacylated tRNA move to the P and E sites, respectively. Catalyzes the coordinated movement of the two tRNA molecules, the mRNA and conformational changes in the ribosome. The chain is Elongation factor G from Streptococcus agalactiae serotype Ia (strain ATCC 27591 / A909 / CDC SS700).